An 830-amino-acid chain; its full sequence is ATP-dependent DNA helicase chl-1 (830 aa).

The region spanning 1 to 403 is the Helicase ATP-binding domain; sequence MDEFSFPFQP…HNLLYMKQLE (403 aa). 35–42 is an ATP binding site; the sequence is SPTGTGKS. 2 stretches are compositionally biased toward basic and acidic residues: residues 124 to 140 and 157 to 168; these read GMVE…RDTD and NDEKSEKQRDSD. Residues 124-173 are disordered; the sequence is GMVEVSRKRKAPARDTDQFLEPQDEAAPSEEYNNDEKSEKQRDSDFFDDV. [4Fe-4S] cluster contacts are provided by Cys-222, Cys-240, Cys-272, and Cys-308. The short motif at 351-354 is the DEAH box element; that stretch reads DEAH.

Belongs to the DEAD box helicase family. DEAH subfamily. DDX11/CHL1 sub-subfamily. The cofactor is [4Fe-4S] cluster.

The protein localises to the nucleus. It carries out the reaction Couples ATP hydrolysis with the unwinding of duplex DNA at the replication fork by translocating in the 5'-3' direction. This creates two antiparallel DNA single strands (ssDNA). The leading ssDNA polymer is the template for DNA polymerase III holoenzyme which synthesizes a continuous strand.. The enzyme catalyses ATP + H2O = ADP + phosphate + H(+). Functionally, required for normal cell proliferation and chromosome stability. Plays a role in DNA repair during replication. The chain is ATP-dependent DNA helicase chl-1 from Caenorhabditis elegans.